Here is a 314-residue protein sequence, read N- to C-terminus: Putative peptide transport system permease protein BruAb2_1031 (314 aa).

A run of 6 helical transmembrane segments spans residues 12 to 32 (AIPV…LLPG), 101 to 121 (LALL…VVAA), 135 to 155 (LALL…VILF), 177 to 197 (WLRS…GYLA), 237 to 257 (VSVL…SVVI), and 286 to 306 (MLFL…LYTI). One can recognise an ABC transmembrane type-1 domain in the interval 95–304 (LPVTISLALL…AINVLVDILY (210 aa)).

This sequence belongs to the binding-protein-dependent transport system permease family. The complex is composed of two ATP-binding proteins (BruAb2_1033 and BruAb2_1034), two transmembrane proteins (BruAb2_1031 and BruAb2_1032) and a solute-binding protein (BruAb2_1030).

Its subcellular location is the cell inner membrane. Functionally, probably part of an ABC transporter complex that could be involved in peptide import. Probably responsible for the translocation of the substrate across the membrane. This Brucella abortus biovar 1 (strain 9-941) protein is Putative peptide transport system permease protein BruAb2_1031.